The sequence spans 886 residues: Pyruvate dehydrogenase E1 component (886 aa).

Homodimer. Part of the PDH complex, consisting of multiple copies of pyruvate dehydrogenase (E1), dihydrolipoamide acetyltransferase (E2) and lipoamide dehydrogenase (E3). The cofactor is thiamine diphosphate.

The catalysed reaction is N(6)-[(R)-lipoyl]-L-lysyl-[protein] + pyruvate + H(+) = N(6)-[(R)-S(8)-acetyldihydrolipoyl]-L-lysyl-[protein] + CO2. Its function is as follows. Component of the pyruvate dehydrogenase (PDH) complex, that catalyzes the overall conversion of pyruvate to acetyl-CoA and CO(2). The protein is Pyruvate dehydrogenase E1 component (aceE) of Haemophilus influenzae (strain ATCC 51907 / DSM 11121 / KW20 / Rd).